Reading from the N-terminus, the 105-residue chain is Thioredoxin (105 aa).

The Thioredoxin domain maps to 2-105 (VKLIESKEAF…KLEATITEFA (104 aa)). Lys3 carries the post-translational modification N6-acetyllysine. An N6-succinyllysine modification is found at Lys8. Residues Cys32 and Cys35 each act as nucleophile in the active site. Cys32 and Cys35 are oxidised to a cystine. An N6-acetyllysine modification is found at Lys39. S-nitrosocysteine is present on residues Cys62 and Cys69. S-nitrosocysteine; alternate is present on Cys73. Lys94 carries the post-translational modification N6-acetyllysine; alternate. Position 94 is an N6-succinyllysine; alternate (Lys94).

It belongs to the thioredoxin family. As to quaternary structure, homodimer; disulfide-linked. Interacts with TXNIP through the redox-active site. Interacts with MAP3K5 and CASP3. Interacts with APEX1; the interaction stimulates the FOS/JUN AP-1 DNA-binding activity in a redox-dependent manner. In terms of processing, in the fully reduced protein, both Cys-69 and Cys-73 are nitrosylated in response to nitric oxide (NO). When two disulfide bonds are present in the protein, only Cys-73 is nitrosylated. Cys-73 can serve as donor for nitrosylation of target proteins.

The protein resides in the nucleus. It is found in the cytoplasm. Its subcellular location is the secreted. Functionally, participates in various redox reactions through the reversible oxidation of its active center dithiol to a disulfide and catalyzes dithiol-disulfide exchange reactions. Plays a role in the reversible S-nitrosylation of cysteine residues in target proteins, and thereby contributes to the response to intracellular nitric oxide. Nitrosylates the active site Cys of CASP3 in response to nitric oxide (NO), and thereby inhibits caspase-3 activity. Induces the FOS/JUN AP-1 DNA binding activity in ionizing radiation (IR) cells through its oxidation/reduction status and stimulates AP-1 transcriptional activity. This Rattus norvegicus (Rat) protein is Thioredoxin (Txn).